The following is a 66-amino-acid chain: UPF0434 protein Jann_0424 (66 aa).

Belongs to the UPF0434 family.

The protein is UPF0434 protein Jann_0424 of Jannaschia sp. (strain CCS1).